A 95-amino-acid polypeptide reads, in one-letter code: Small ribosomal subunit protein bS18 (95 aa).

It belongs to the bacterial ribosomal protein bS18 family. Part of the 30S ribosomal subunit. Forms a tight heterodimer with protein bS6.

Functionally, binds as a heterodimer with protein bS6 to the central domain of the 16S rRNA, where it helps stabilize the platform of the 30S subunit. The polypeptide is Small ribosomal subunit protein bS18 (Ehrlichia canis (strain Jake)).